Consider the following 156-residue polypeptide: Small ribosomal subunit protein bS6 (156 aa).

Residues 95–156 (AITETSPLAK…DRDEQSEDSE (62 aa)) form a disordered region. Residues 117–126 (RSGRDRDESG) show a composition bias toward basic and acidic residues.

The protein belongs to the bacterial ribosomal protein bS6 family.

Functionally, binds together with bS18 to 16S ribosomal RNA. This Nitrosococcus oceani (strain ATCC 19707 / BCRC 17464 / JCM 30415 / NCIMB 11848 / C-107) protein is Small ribosomal subunit protein bS6.